The following is a 283-amino-acid chain: Shikimate dehydrogenase (NADP(+)) (283 aa).

Residues serine 16–serine 18 and threonine 63 each bind shikimate. Lysine 67 functions as the Proton acceptor in the catalytic mechanism. Aspartate 79 lines the NADP(+) pocket. Shikimate contacts are provided by asparagine 88 and aspartate 103. NADP(+) is bound by residues glycine 128–alanine 132, alanine 223, and glycine 243.

The protein belongs to the shikimate dehydrogenase family. Homodimer.

It carries out the reaction shikimate + NADP(+) = 3-dehydroshikimate + NADPH + H(+). The protein operates within metabolic intermediate biosynthesis; chorismate biosynthesis; chorismate from D-erythrose 4-phosphate and phosphoenolpyruvate: step 4/7. Involved in the biosynthesis of the chorismate, which leads to the biosynthesis of aromatic amino acids. Catalyzes the reversible NADPH linked reduction of 3-dehydroshikimate (DHSA) to yield shikimate (SA). In Xanthomonas campestris pv. campestris (strain 8004), this protein is Shikimate dehydrogenase (NADP(+)).